We begin with the raw amino-acid sequence, 103 residues long: uncharacterized protein (103 aa).

This is an uncharacterized protein from Sinorhizobium fredii (strain NBRC 101917 / NGR234).